The chain runs to 512 residues: Lysine--tRNA ligase (512 aa).

Glu422 and Glu429 together coordinate Mg(2+).

It belongs to the class-II aminoacyl-tRNA synthetase family. In terms of assembly, homodimer. Requires Mg(2+) as cofactor.

Its subcellular location is the cytoplasm. It catalyses the reaction tRNA(Lys) + L-lysine + ATP = L-lysyl-tRNA(Lys) + AMP + diphosphate. The sequence is that of Lysine--tRNA ligase from Paraburkholderia phymatum (strain DSM 17167 / CIP 108236 / LMG 21445 / STM815) (Burkholderia phymatum).